A 182-amino-acid polypeptide reads, in one-letter code: Heat shock protein beta-2 (182 aa).

Residues 55 to 163 (RAGEGARAGA…DTEVNEVYIS (109 aa)) form the sHSP domain.

Belongs to the small heat shock protein (HSP20) family. Interacts with DMPK; may enhance its kinase activity.

The protein localises to the cytoplasm. It is found in the nucleus. Its function is as follows. May regulate the kinase DMPK. In Mus musculus (Mouse), this protein is Heat shock protein beta-2 (Hspb2).